Reading from the N-terminus, the 131-residue chain is Sec-independent protein translocase protein TatB (131 aa).

The helical transmembrane segment at 2-22 (LGSLSWEHMLVLVVVGLVVLG) threads the bilayer. The disordered stretch occupies residues 96 to 131 (AFDRPVNGAAAQPPPAPAPPPEPHRSGQTPFDADAT). Residues 107-116 (QPPPAPAPPP) are compositionally biased toward pro residues.

Belongs to the TatB family. As to quaternary structure, the Tat system comprises two distinct complexes: a TatABC complex, containing multiple copies of TatA, TatB and TatC subunits, and a separate TatA complex, containing only TatA subunits. Substrates initially bind to the TatABC complex, which probably triggers association of the separate TatA complex to form the active translocon.

It is found in the cell membrane. In terms of biological role, part of the twin-arginine translocation (Tat) system that transports large folded proteins containing a characteristic twin-arginine motif in their signal peptide across membranes. Together with TatC, TatB is part of a receptor directly interacting with Tat signal peptides. TatB may form an oligomeric binding site that transiently accommodates folded Tat precursor proteins before their translocation. This is Sec-independent protein translocase protein TatB from Mycolicibacterium paratuberculosis (strain ATCC BAA-968 / K-10) (Mycobacterium paratuberculosis).